A 192-amino-acid polypeptide reads, in one-letter code: Erythropoietin (192 aa).

The N-terminal stretch at 1-26 is a signal peptide; it reads MGVPDCLALPLLVTFLLLSLGLPVLG. C33 and C187 are disulfide-bonded. Residues N50, N64, and N109 are each glycosylated (N-linked (GlcNAc...) asparagine).

It belongs to the EPO/TPO family.

The protein localises to the secreted. In terms of biological role, hormone involved in the regulation of erythrocyte proliferation and differentiation and the maintenance of a physiological level of circulating erythrocyte mass. Binds to EPOR leading to EPOR dimerization and JAK2 activation thereby activating specific downstream effectors, including STAT1 and STAT3. This chain is Erythropoietin (EPO), found in Nannospalax galili (Northern Israeli blind subterranean mole rat).